The sequence spans 361 residues: Holliday junction branch migration complex subunit RuvB (361 aa).

A disordered region spans residues 1–25; it reads MSIHTDDFGQGGFAQGGFPPDKAPD. The tract at residues 5–207 is large ATPase domain (RuvB-L); sequence TDDFGQGGFA…FGIVARLEFY (203 aa). ATP contacts are provided by residues Leu-46, Arg-47, Gly-88, Lys-91, Thr-92, Thr-93, 154 to 156, Arg-197, Tyr-207, and Arg-244; that span reads EDY. Thr-92 provides a ligand contact to Mg(2+). Residues 208-278 form a small ATPAse domain (RuvB-S) region; it reads TAEELARIVR…LADRALAMLD (71 aa). The head domain (RuvB-H) stretch occupies residues 281-361; sequence PQGFDIMDRK…GLPVPGDDAS (81 aa). DNA-binding residues include Arg-336 and Arg-341.

Belongs to the RuvB family. Homohexamer. Forms an RuvA(8)-RuvB(12)-Holliday junction (HJ) complex. HJ DNA is sandwiched between 2 RuvA tetramers; dsDNA enters through RuvA and exits via RuvB. An RuvB hexamer assembles on each DNA strand where it exits the tetramer. Each RuvB hexamer is contacted by two RuvA subunits (via domain III) on 2 adjacent RuvB subunits; this complex drives branch migration. In the full resolvosome a probable DNA-RuvA(4)-RuvB(12)-RuvC(2) complex forms which resolves the HJ.

It is found in the cytoplasm. It carries out the reaction ATP + H2O = ADP + phosphate + H(+). In terms of biological role, the RuvA-RuvB-RuvC complex processes Holliday junction (HJ) DNA during genetic recombination and DNA repair, while the RuvA-RuvB complex plays an important role in the rescue of blocked DNA replication forks via replication fork reversal (RFR). RuvA specifically binds to HJ cruciform DNA, conferring on it an open structure. The RuvB hexamer acts as an ATP-dependent pump, pulling dsDNA into and through the RuvAB complex. RuvB forms 2 homohexamers on either side of HJ DNA bound by 1 or 2 RuvA tetramers; 4 subunits per hexamer contact DNA at a time. Coordinated motions by a converter formed by DNA-disengaged RuvB subunits stimulates ATP hydrolysis and nucleotide exchange. Immobilization of the converter enables RuvB to convert the ATP-contained energy into a lever motion, pulling 2 nucleotides of DNA out of the RuvA tetramer per ATP hydrolyzed, thus driving DNA branch migration. The RuvB motors rotate together with the DNA substrate, which together with the progressing nucleotide cycle form the mechanistic basis for DNA recombination by continuous HJ branch migration. Branch migration allows RuvC to scan DNA until it finds its consensus sequence, where it cleaves and resolves cruciform DNA. This is Holliday junction branch migration complex subunit RuvB from Delftia acidovorans (strain DSM 14801 / SPH-1).